Here is a 301-residue protein sequence, read N- to C-terminus: Prohibitin-2 (301 aa).

2 necessary for transcriptional repression regions span residues Met-19 to Ala-49 and Ala-150 to Asp-174. Residues Arg-191–Met-237 adopt a coiled-coil conformation.

It belongs to the prohibitin family. As to quaternary structure, the mitochondrial prohibitin complex consists of two subunits (PHB1 and PHB2), assembled into a membrane-associated ring-shaped supercomplex of approximately 1 mDa.

It is found in the mitochondrion inner membrane. The protein resides in the cytoplasm. It localises to the nucleus. Its subcellular location is the cell membrane. Its function is as follows. Protein with pleiotropic attributes mediated in a cell-compartment- and tissue-specific manner, which include the plasma membrane-associated cell signaling functions, mitochondrial chaperone, and transcriptional co-regulator of transcription factors and sex steroid hormones in the nucleus. Functionally, in the mitochondria, together with PHB, forms large ring complexes (prohibitin complexes) in the inner mitochondrial membrane (IMM) and functions as a chaperone protein that stabilizes mitochondrial respiratory enzymes and maintains mitochondrial integrity in the IMM, which is required for mitochondrial morphogenesis, neuronal survival, and normal lifespan. In the nucleus, serves as transcriptional co-regulator. This chain is Prohibitin-2 (phb2), found in Xenopus tropicalis (Western clawed frog).